The primary structure comprises 218 residues: Adenylate kinase (218 aa).

10-15 (GAGKGT) contributes to the ATP binding site. Residues 30–59 (STGDMLRAAVKAGSPLGLKVKEVMATGGLV) form an NMP region. Residues T31, R36, 57-59 (GLV), 85-88 (GFPR), and Q92 each bind AMP. The tract at residues 122-159 (GRRVHEASGRVYHVDYNPPKVEGKDDVTGEPLVQREDD) is LID. Residues R123 and 132–133 (VY) contribute to the ATP site. Residues R156 and R167 each contribute to the AMP site. Residue G203 participates in ATP binding.

The protein belongs to the adenylate kinase family. Monomer.

It is found in the cytoplasm. The catalysed reaction is AMP + ATP = 2 ADP. Its pathway is purine metabolism; AMP biosynthesis via salvage pathway; AMP from ADP: step 1/1. Catalyzes the reversible transfer of the terminal phosphate group between ATP and AMP. Plays an important role in cellular energy homeostasis and in adenine nucleotide metabolism. This chain is Adenylate kinase, found in Hahella chejuensis (strain KCTC 2396).